Here is a 194-residue protein sequence, read N- to C-terminus: Large ribosomal subunit protein eL15 (194 aa).

Residues 165–194 (AGKKGRGLRNKGKGAEKVRPSIRANEGKGK) are disordered. Residues 167 to 176 (KKGRGLRNKG) are compositionally biased toward basic residues. Residues 177–194 (KGAEKVRPSIRANEGKGK) are compositionally biased toward basic and acidic residues.

This sequence belongs to the eukaryotic ribosomal protein eL15 family. Part of the 50S ribosomal subunit.

The chain is Large ribosomal subunit protein eL15 from Pyrococcus furiosus (strain ATCC 43587 / DSM 3638 / JCM 8422 / Vc1).